Here is a 574-residue protein sequence, read N- to C-terminus: K(+)/H(+) antiporter NhaP2 (574 aa).

13 helical membrane-spanning segments follow: residues 6 to 26, 34 to 54, 58 to 78, 87 to 107, 109 to 129, 173 to 193, 196 to 216, 219 to 239, 242 to 262, 271 to 291, 299 to 319, 335 to 355, and 359 to 379; these read INSFFLIGALLAAVSVLLSPV, ILLIFLAVGILAGEDGPGGIL, YSTAYLVSNLALAIILLDGGM, VALWPALSLATFGVAITTSIT, VMAAWLFDLHWLQGLLVGAIV, IAILANVDAELSVSFMLISFI, FGLGIFLGLGGGWLLWKLVNL, LAEGLYSILVLSGGLMIYAAS, LGGSGILSIYLVGLFLGNKPT, VLDGMTWVSQIGMFLVLGLLL, IWLPGLALAFGMILFARPLAV, WFISWVGLRGAVPIILAVFPM, and LPGAQLYFNLAFFVVLVSLLV. In terms of domain architecture, RCK C-terminal spans 405 to 486; the sequence is SGVEIYPSSE…LEALSNLFSQ (82 aa).

Belongs to the monovalent cation:proton antiporter 1 (CPA1) transporter (TC 2.A.36) family. NhaP2 subfamily.

It is found in the cell inner membrane. The enzyme catalyses K(+)(in) + H(+)(out) = K(+)(out) + H(+)(in). In terms of biological role, k(+)/H(+) antiporter that extrudes potassium in exchange for external protons and maintains the internal concentration of potassium under toxic levels. The polypeptide is K(+)/H(+) antiporter NhaP2 (Shewanella sp. (strain ANA-3)).